The following is a 433-amino-acid chain: Histidine--tRNA ligase (433 aa).

Belongs to the class-II aminoacyl-tRNA synthetase family. Homodimer.

The protein resides in the cytoplasm. It catalyses the reaction tRNA(His) + L-histidine + ATP = L-histidyl-tRNA(His) + AMP + diphosphate + H(+). The chain is Histidine--tRNA ligase from Pseudothermotoga lettingae (strain ATCC BAA-301 / DSM 14385 / NBRC 107922 / TMO) (Thermotoga lettingae).